The following is a 144-amino-acid chain: Large ribosomal subunit protein uL11 (144 aa).

The protein belongs to the universal ribosomal protein uL11 family. As to quaternary structure, part of the ribosomal stalk of the 50S ribosomal subunit. Interacts with L10 and the large rRNA to form the base of the stalk. L10 forms an elongated spine to which L12 dimers bind in a sequential fashion forming a multimeric L10(L12)X complex. One or more lysine residues are methylated.

Its function is as follows. Forms part of the ribosomal stalk which helps the ribosome interact with GTP-bound translation factors. This is Large ribosomal subunit protein uL11 from Neisseria meningitidis serogroup A / serotype 4A (strain DSM 15465 / Z2491).